A 315-amino-acid chain; its full sequence is Protein ORANGE-LIKE, chloroplastic (315 aa).

The transit peptide at 1–16 (MTCFSSATPHRHHLLL) directs the protein to the chloroplast. A run of 2 helical transmembrane segments spans residues 155–175 (LYST…LIAP) and 207–227 (IVAS…LIEV). The CR-type zinc finger occupies 225-307 (IEVNNVKQQE…CTGMVTASEH (83 aa)). The stretch at 238–245 (CKYCLGTG) is one CXXCXGXG motif repeat. The stretch at 249-256 (CARCSASG) is one CXXCXXXG motif repeat. A CXXCXGXG motif repeat occupies 282–289 (CLNCSGAG). Residues 293-300 (CPTCLCTG) form a CXXCXXXG motif repeat.

The protein belongs to the orange-like family. As to quaternary structure, interacts with PSY1.

It localises to the plastid. It is found in the chloroplast membrane. In terms of biological role, may be associated with accumulation of carotenoids in chromoplasts. This Arabidopsis thaliana (Mouse-ear cress) protein is Protein ORANGE-LIKE, chloroplastic (ORLIKE).